A 542-amino-acid chain; its full sequence is Chaperonin GroEL 2 (542 aa).

Residues 30–33 (TLGP), Lys51, 87–91 (DGTTT), Gly415, and Asp496 each bind ATP. The tract at residues 523 to 542 (AEKPKKDGQPQMPPAPGMDF) is disordered. Residues 533–542 (QMPPAPGMDF) show a composition bias toward pro residues.

This sequence belongs to the chaperonin (HSP60) family. In terms of assembly, forms a cylinder of 14 subunits composed of two heptameric rings stacked back-to-back. Interacts with the co-chaperonin GroES.

The protein resides in the cytoplasm. It carries out the reaction ATP + H2O + a folded polypeptide = ADP + phosphate + an unfolded polypeptide.. Its function is as follows. Together with its co-chaperonin GroES, plays an essential role in assisting protein folding. The GroEL-GroES system forms a nano-cage that allows encapsulation of the non-native substrate proteins and provides a physical environment optimized to promote and accelerate protein folding. In Sinorhizobium medicae (strain WSM419) (Ensifer medicae), this protein is Chaperonin GroEL 2.